The chain runs to 380 residues: GATOR1 complex protein NPRL2 (380 aa).

Residues 1-133 (MGSSCRIECI…SKQKLVPIMT (133 aa)) are interaction with PDPK1. A GDP-binding site is contributed by R78. Asymmetric dimethylarginine is present on R78. Glycyl lysine isopeptide (Lys-Gly) (interchain with G-Cter in ubiquitin) cross-links involve residues K158 and K357.

It belongs to the NPR2 family. Within the GATOR complex, component of the GATOR1 subcomplex, made of DEPDC5, NPRL2 and NPRL3. GATOR1 mediates the strong interaction of the GATOR complex with small GTPases Rag (RagA/RRAGA, RagB/RRAGB, RagC/RRAGC and/or RagD/RRAGD) heterodimers. GATOR1 interacts with GPR155/LYCHOS; interaction takes place in presence of cholesterol and prevents interaction between GATOR1 and KICSTOR. Interacts with PDPK1. In terms of processing, in the presence of abundant amino acids, ubiquitinated at Lys-158 and Lys-357 via 'Lys-6'-linked ubiquitination by the WDR24 component of the GATOR2 complex, thereby inhibiting the GATOR1 complex and promoting mTORC1 activation. Post-translationally, asymmetric dimethylation at Arg-78 by PRMT1 inhibits the GTPase activator activity of the GATOR1 complex and consequently inducing timely mTORC1 activation under methionine-sufficient conditions.

It localises to the lysosome membrane. Functionally, catalytic component of the GATOR1 complex, a multiprotein complex that functions as an inhibitor of the amino acid-sensing branch of the mTORC1 pathway. In response to amino acid depletion, the GATOR1 complex has GTPase activating protein (GAP) activity and strongly increases GTP hydrolysis by RagA/RRAGA (or RagB/RRAGB) within heterodimeric Rag complexes, thereby turning them into their inactive GDP-bound form, releasing mTORC1 from lysosomal surface and inhibiting mTORC1 signaling. In the presence of abundant amino acids, the GATOR1 complex is ubiquitinated and inhibited by GATOR2. Within the GATOR1 complex, NPRL2 constitutes the catalytic subunit that mediates the GTPase activator activity and under methionine-sufficient conditions, the GTPase activator activity is inhibited by PRMT1 through methylation and consequently inducing timely mTORC1 activation. Its function is as follows. Suppresses Src-dependent tyrosine phosphorylation and activation of PDPK1 and its downstream signaling. Down-regulates PDPK1 kinase activity by interfering with tyrosine phosphorylation at 'Tyr-9', 'Tyr-373' and 'Tyr-376' residues. May act as a tumor suppressor. Suppresses cell growth and enhances sensitivity to various anticancer drugs. The chain is GATOR1 complex protein NPRL2 from Mus musculus (Mouse).